Consider the following 467-residue polypeptide: ATP synthase subunit beta (467 aa).

156 to 163 (GGAGVGKT) contributes to the ATP binding site.

It belongs to the ATPase alpha/beta chains family. In terms of assembly, F-type ATPases have 2 components, CF(1) - the catalytic core - and CF(0) - the membrane proton channel. CF(1) has five subunits: alpha(3), beta(3), gamma(1), delta(1), epsilon(1). CF(0) has three main subunits: a(1), b(2) and c(9-12). The alpha and beta chains form an alternating ring which encloses part of the gamma chain. CF(1) is attached to CF(0) by a central stalk formed by the gamma and epsilon chains, while a peripheral stalk is formed by the delta and b chains.

The protein localises to the cell inner membrane. It catalyses the reaction ATP + H2O + 4 H(+)(in) = ADP + phosphate + 5 H(+)(out). Its function is as follows. Produces ATP from ADP in the presence of a proton gradient across the membrane. The catalytic sites are hosted primarily by the beta subunits. This chain is ATP synthase subunit beta, found in Cupriavidus necator (strain ATCC 17699 / DSM 428 / KCTC 22496 / NCIMB 10442 / H16 / Stanier 337) (Ralstonia eutropha).